The sequence spans 489 residues: MEKWWFNSMLSNEELEHACGLSKSMESLGPIGNTSGGEDHIINNMDKNIHSWGDSGSSSCSNVYPLFGVRGIQGFISDDTFLVRDSNGDSYSIYFDIENKIFEIDNDHSFLSELESSFSSYQNNGSNSDNPYYDRYIYDTKYSWNNYINSCIDSYLRSEIRIDSYILSGSDNYSDSYIYSYICSECVNSSESSSIKTSTNGSDLNIRGRYNDLDLNKKYRHLWVQCENCYGLNYKKFFRSKMNICEQCGYHLKMSSSDRIELSIDTGTWDPMDEDMVSMDPIEFHSEEELYKDRINSYQRKTGLTEAVQTGIGQLNGIPIAIGVMDFQFMGGSMGSVVGEKITRLIEYATNRSLPVIIVCASGGARMQEGSLSLMQMAKISSASYNYQSNKKLFYVSILTSPTTGGVTASFGMLGDIIIAEPNAYIAFAGKRVIEQTLNKTVPDGSQTAEYLFHKGLFDPIVPRNLLKGVLSELFQLHGFFPLNSNSIK.

Residues 222-489 (LWVQCENCYG…FFPLNSNSIK (268 aa)) enclose the CoA carboxyltransferase N-terminal domain. Zn(2+) contacts are provided by Cys226, Cys229, Cys245, and Cys248. Residues 226–248 (CENCYGLNYKKFFRSKMNICEQC) form a C4-type zinc finger.

This sequence belongs to the AccD/PCCB family. In terms of assembly, acetyl-CoA carboxylase is a heterohexamer composed of biotin carboxyl carrier protein, biotin carboxylase and 2 subunits each of ACCase subunit alpha and ACCase plastid-coded subunit beta (accD). The cofactor is Zn(2+).

The protein localises to the plastid. It is found in the chloroplast stroma. The catalysed reaction is N(6)-carboxybiotinyl-L-lysyl-[protein] + acetyl-CoA = N(6)-biotinyl-L-lysyl-[protein] + malonyl-CoA. The protein operates within lipid metabolism; malonyl-CoA biosynthesis; malonyl-CoA from acetyl-CoA: step 1/1. Functionally, component of the acetyl coenzyme A carboxylase (ACC) complex. Biotin carboxylase (BC) catalyzes the carboxylation of biotin on its carrier protein (BCCP) and then the CO(2) group is transferred by the transcarboxylase to acetyl-CoA to form malonyl-CoA. The protein is Acetyl-coenzyme A carboxylase carboxyl transferase subunit beta, chloroplastic of Buxus microphylla (Littleleaf boxwood).